Reading from the N-terminus, the 104-residue chain is Thioredoxin 1 (104 aa).

Residues Val2–Ala104 form the Thioredoxin domain. Residues Cys30 and Cys33 each act as nucleophile in the active site. Cys30 and Cys33 form a disulfide bridge.

Belongs to the thioredoxin family. Post-translationally, the disulfide bond between Cys-30 and Cys-33 acts as a redox-active center and is reduced by thioredoxin reductase TRXR.

Its subcellular location is the cytoplasm. Participates in various redox reactions through the reversible oxidation of its active center dithiol to a disulfide and catalyzes dithiol-disulfide exchange reactions. By modifying the redox status of targeted proteins, induces changes in their structure and activity. Reduces oxidized glutathione (GSSG), thereby acting as a backup for the glutathione redox system. Reduces nitroglutathione (GSNO), a compound involved in the transport of nitric oxide (NO). Also reduces oxidative stress by detoxifying hydrogen peroxide, tert-butyl hydroperoxide and cumene hydroperoxide. Activates ornithine aminotransferase OAT by reducing a disulfide bond in the substrate binding loop, thereby enhancing the affinity of OAT for its substrates. May reduce S-adenosyl-L-homocysteine hydrolase SAHH. In Plasmodium falciparum (isolate 3D7), this protein is Thioredoxin 1.